We begin with the raw amino-acid sequence, 196 residues long: Protein LURP-one-related 8 (196 aa).

This sequence belongs to the LOR family.

Its function is as follows. Might be related to the phospholipid scramblase and tubby-like superfamily of membrane tethered transcription factors. This is Protein LURP-one-related 8 from Arabidopsis thaliana (Mouse-ear cress).